The chain runs to 760 residues: uncharacterized protein (760 aa).

The span at 578-587 shows a compositional bias: basic residues; it reads RNRKQSKLRI. The interval 578–604 is disordered; it reads RNRKQSKLRISKQQEIQPQKEESVKKE. Residues 595 to 604 are compositionally biased toward basic and acidic residues; that stretch reads PQKEESVKKE.

Its subcellular location is the mitochondrion. This is an uncharacterized protein from Dictyostelium citrinum (Slime mold).